Consider the following 329-residue polypeptide: Synaptonemal complex central element protein 1 (329 aa).

The segment at 1 to 29 is disordered; the sequence is MATRPQPLGMEPEGSADLLHGPEGARGQY. 2 coiled-coil regions span residues 54-167 and 194-294; these read RIEV…LETL and KEQL…ILAH. The disordered stretch occupies residues 291-329; it reads ILAHSTQNEEDSSWRMASPKPVEVHEETAQDQERPSSRT. The segment covering 312 to 329 has biased composition (basic and acidic residues); sequence VEVHEETAQDQERPSSRT.

This sequence belongs to the SYCE family. In terms of assembly, homodimer. Found in a complex with SYCP1 and SYCE2. Interacts with SYCP1, SYCE2 and SYCE3. Interacts with SIX6OS1. Meiotic cells (at protein level). Expressed in the ovary and testis.

It localises to the nucleus. Its subcellular location is the chromosome. In terms of biological role, major component of the transverse central element of synaptonemal complexes (SCS), formed between homologous chromosomes during meiotic prophase. Requires SYCP1 in order to be incorporated into the central element. May have a role in the synaptonemal complex assembly, stabilization and recombination. This Mus musculus (Mouse) protein is Synaptonemal complex central element protein 1 (Syce1).